The primary structure comprises 278 residues: Indole-3-glycerol phosphate synthase (278 aa).

It belongs to the TrpC family.

It catalyses the reaction 1-(2-carboxyphenylamino)-1-deoxy-D-ribulose 5-phosphate + H(+) = (1S,2R)-1-C-(indol-3-yl)glycerol 3-phosphate + CO2 + H2O. Its pathway is amino-acid biosynthesis; L-tryptophan biosynthesis; L-tryptophan from chorismate: step 4/5. The polypeptide is Indole-3-glycerol phosphate synthase (Pseudomonas fluorescens (strain Pf0-1)).